We begin with the raw amino-acid sequence, 264 residues long: Transmembrane protein 41A (264 aa).

An N-terminal signal peptide occupies residues M1–A17. 5 consecutive transmembrane segments (helical) span residues A67–G87, G100–L122, L153–L173, A175–P195, and W219–I239. The tract at residues G96–L207 is VTT domain.

It belongs to the TMEM41 family.

The protein resides in the membrane. The sequence is that of Transmembrane protein 41A (Tmem41a) from Mus musculus (Mouse).